Consider the following 368-residue polypeptide: METTSANFTQNDSNVCTNLYNHRGWAQYFLPAMYSLICIVGLLGNVLALHVIWPNLKKINSTTLYSANLVVSDILFSLALPLRVVYYARGFDWPMGEGLCKAVALLFYINMYAGVNFMTCLSVDRFIAVVLPLRFSRFRKVQKVRYICGVVWVVVLMQTLPLLSMPMTNIEQSGHITCMEYPNFEKIDNLPVMLIGAVVLGFGIPVITILVCYTALCLKLRHLAKSNKLTEKSGRSSKAIGVICTVILVFVVCYSPYHVDLLQYMIKKLRYDPDCSELHKFQISLHITVCFMNLNSCLDPFIYFFACKGYKKKVLKLLKKQVSMSFSSVVRTSPEGSSKDVFGNDKIQMNSRSFQKERSSVLLNSLEQ.

The Extracellular segment spans residues 1–27; it reads METTSANFTQNDSNVCTNLYNHRGWAQ. N-linked (GlcNAc...) asparagine glycans are attached at residues Asn-7 and Asn-11. A helical transmembrane segment spans residues 28-53; the sequence is YFLPAMYSLICIVGLLGNVLALHVIW. Topologically, residues 54-73 are cytoplasmic; it reads PNLKKINSTTLYSANLVVSD. The helical transmembrane segment at 74 to 91 threads the bilayer; that stretch reads ILFSLALPLRVVYYARGF. Topologically, residues 92 to 101 are extracellular; the sequence is DWPMGEGLCK. Cys-100 and Cys-178 are oxidised to a cystine. A helical membrane pass occupies residues 102-123; the sequence is AVALLFYINMYAGVNFMTCLSV. Over 124–145 the chain is Cytoplasmic; sequence DRFIAVVLPLRFSRFRKVQKVR. The chain crosses the membrane as a helical span at residues 146–164; the sequence is YICGVVWVVVLMQTLPLLS. Topologically, residues 165 to 189 are extracellular; that stretch reads MPMTNIEQSGHITCMEYPNFEKIDN. Residues 190–212 traverse the membrane as a helical segment; sequence LPVMLIGAVVLGFGIPVITILVC. At 213–238 the chain is on the cytoplasmic side; it reads YTALCLKLRHLAKSNKLTEKSGRSSK. Residues 239–262 form a helical membrane-spanning segment; that stretch reads AIGVICTVILVFVVCYSPYHVDLL. Topologically, residues 263–282 are extracellular; the sequence is QYMIKKLRYDPDCSELHKFQ. Residues 283–307 form a helical membrane-spanning segment; that stretch reads ISLHITVCFMNLNSCLDPFIYFFAC. Residues 308–368 lie on the Cytoplasmic side of the membrane; the sequence is KGYKKKVLKL…SSVLLNSLEQ (61 aa).

This sequence belongs to the G-protein coupled receptor 1 family.

The protein resides in the cell membrane. Functionally, G-protein coupled receptor expressed in lymphocytes that acts as a chemotactic receptor for B-cells, T-cells, splenic dendritic cells, monocytes/macrophages and astrocytes. Receptor for oxysterol 7-alpha,25-dihydroxycholesterol (7-alpha,25-OHC) and other related oxysterols. Mediates cell positioning and movement of a number of cells by binding the 7-alpha,25-OHC ligand that forms a chemotactic gradient. Binding of 7-alpha,25-OHC mediates the correct localization of B-cells during humoral immune responses. The chain is G-protein coupled receptor 183-A (gpr183a) from Danio rerio (Zebrafish).